A 539-amino-acid polypeptide reads, in one-letter code: MQLTELSIKSQNKFVQHYIDGENMSSFFDYDIHSEDVWQKRLHDLSSQPFAREELADYLSSYHEKFHSAAMQASIEKLRDPKSAAVVGGQQAGLLTGPLYTIHKIISIIVLARQQEEALQIPVVPIFWVAGEDHDLEEINFVHTSTENKGPVKQKLPQSYWKKTSAAKTELDQEKCAAWIDEVFAAFEETDHTNTLLQNVKRCLRSSETFTDFFELLIADLFQEEGLILMNSGDPGIKKLETGMFQQILKHNHELAKAVSDQQRLMREAGYHPIIESDKDQANLFYEHEGERFLIEKENGVFVIKELDLKWTNDELHTHMEEKPECFSNNVVTRPLMQEFLIPTLAFIAGPGEINYWGELKRAFSLMGFRMTPVVPRLNITILERHIEKKLSERNIPLQEAIEHGTGHLKDTYFEEQIPEEFSSVMEQAKSQIEAVHKRARDEALKVDSSLEPLLQKNAAFIQDQLLFLERTVTKRIEEKEGFVLRDYERIQNSIRPLGAPQERIWNVMYYLNRYGPKFFTTFKHLPFSFQNQHQIVKL.

Residues 455 to 475 (LQKNAAFIQDQLLFLERTVTK) are a coiled coil.

This sequence belongs to the BshC family.

In terms of biological role, involved in bacillithiol (BSH) biosynthesis. May catalyze the last step of the pathway, the addition of cysteine to glucosamine malate (GlcN-Mal) to generate BSH. This Bacillus velezensis (strain DSM 23117 / BGSC 10A6 / LMG 26770 / FZB42) (Bacillus amyloliquefaciens subsp. plantarum) protein is Putative cysteine ligase BshC.